The following is a 304-amino-acid chain: Cell surface-binding protein OPG105 (304 aa).

This sequence belongs to the alpha-carbonic anhydrase family. As to quaternary structure, homodimer; disulfide-linked. Post-translationally, apparently non-glycosylated.

The protein localises to the virion membrane. Functionally, binds to chondroitin sulfate on the cell surface to provide virion attachment to target cell. The sequence is that of Cell surface-binding protein OPG105 (OPG105) from Monkeypox virus.